We begin with the raw amino-acid sequence, 220 residues long: MSKSMYHYIAEAWKEKSRELEALIRQRLIEWRREPSVVRLEKPTRLDKARALGYKAKVGFIIVRVRVRKGGQRKPRPDSGRRPKRMGVYGYAPAKSLRLIAEERAARKFPGLEVLNSYYVAEDGRYKWYEVILVDPHHPSICNDPDVNWICEPQNRGRVFRGLTSAGKKMRGLRKSRGLRGTVYYKWKRKLKERELKKRHEASRGARDPWQIAEKLKEEK.

Residues K197–R207 show a composition bias toward basic and acidic residues. A disordered region spans residues K197 to K220.

Belongs to the eukaryotic ribosomal protein eL15 family.

In Desulfurococcus amylolyticus (strain DSM 18924 / JCM 16383 / VKM B-2413 / 1221n) (Desulfurococcus kamchatkensis), this protein is Large ribosomal subunit protein eL15.